A 60-amino-acid chain; its full sequence is Stress response protein YkoL (60 aa).

The protein is Stress response protein YkoL (ykoL) of Bacillus subtilis (strain 168).